A 423-amino-acid polypeptide reads, in one-letter code: UPF0229 protein PST_0721 (423 aa).

The segment at 84–109 (AGERIPRPQGGGGGQGAGQASNSGEG) is disordered.

Belongs to the UPF0229 family.

The polypeptide is UPF0229 protein PST_0721 (Stutzerimonas stutzeri (strain A1501) (Pseudomonas stutzeri)).